The primary structure comprises 74 residues: Protein SlyX homolog (74 aa).

The protein belongs to the SlyX family.

The polypeptide is Protein SlyX homolog (Neisseria meningitidis serogroup C / serotype 2a (strain ATCC 700532 / DSM 15464 / FAM18)).